A 245-amino-acid chain; its full sequence is Outer dense fiber protein 1 (245 aa).

Residues Ser5 and Ser10 each carry the phosphoserine modification. Repeat 1 spans residues 34–38 (RCLCD). A 2 X 5 AA repeats of [RC]-C-L-C-D region spans residues 34–78 (RCLCDLYMHPYCCCDLHPYPYCLCYSKRSRSCGLCDLYYPCCLCD). Position 64 is a phosphoserine (Ser64). The stretch at 74–78 (CCLCD) is repeat 2. Ser87, Ser108, Ser109, Ser137, Ser153, Ser175, and Ser180 each carry phosphoserine. The tract at residues 195-233 (CNPCNPCSPCSPCGPCGPCGPCGPCGPCGPCDPCNPCYP) is C-X-P repeat region.

Interacts (via leucine zipper motif) with TCP11. Interacts with SPAG4. Interacts with KLC3. Interacts with CCDC42. As to expression, testis. Specifically located to the round spermatid layer and to the luminally-oriented cytoplasm of elongated spermatids.

Its subcellular location is the cell projection. It localises to the cilium. The protein resides in the flagellum. It is found in the cytoplasm. The protein localises to the cytoskeleton. Its subcellular location is the microtubule organizing center. It localises to the centrosome. Functionally, component of the outer dense fibers (ODF) of spermatozoa. ODF are filamentous structures located on the outside of the axoneme in the midpiece and principal piece of the mammalian sperm tail and may help to maintain the passive elastic structures and elastic recoil of the sperm tail. In Rattus norvegicus (Rat), this protein is Outer dense fiber protein 1 (Odf1).